A 130-amino-acid polypeptide reads, in one-letter code: Small ribosomal subunit protein uS11 (130 aa).

The protein belongs to the universal ribosomal protein uS11 family. In terms of assembly, part of the 30S ribosomal subunit. Interacts with proteins S7 and S18. Binds to IF-3.

Located on the platform of the 30S subunit, it bridges several disparate RNA helices of the 16S rRNA. Forms part of the Shine-Dalgarno cleft in the 70S ribosome. This chain is Small ribosomal subunit protein uS11, found in Synechococcus sp. (strain CC9605).